The following is a 193-amino-acid chain: Penicillin-binding protein activator LpoB (193 aa).

The N-terminal stretch at 1–16 (MKKMLFVVAAVFLLAG) is a signal peptide. C17 is lipidated: N-palmitoyl cysteine. Residue C17 is the site of S-diacylglycerol cysteine attachment. The interval 23-50 (QQPPAPVEPVTPTEPTEPPKPIEPPIEV) is disordered. Residues 37–46 (PTEPPKPIEP) show a composition bias toward pro residues.

Belongs to the LpoB family. As to quaternary structure, interacts with PBP1b.

The protein localises to the cell outer membrane. Functionally, regulator of peptidoglycan synthesis that is essential for the function of penicillin-binding protein 1B (PBP1b). The sequence is that of Penicillin-binding protein activator LpoB from Proteus mirabilis (strain HI4320).